We begin with the raw amino-acid sequence, 348 residues long: Casein kinase II subunit alpha (348 aa).

The Protein kinase domain maps to 55–340 (YEIVRKIGRG…PLEAMEHPFF (286 aa)). Residues 61–69 (IGRGKFSEV) and K84 each bind ATP. The Proton acceptor role is filled by D172.

This sequence belongs to the protein kinase superfamily. Ser/Thr protein kinase family. CK2 subfamily. Tetramer of two alpha and two beta chains.

It localises to the cytoplasm. The enzyme catalyses L-seryl-[protein] + ATP = O-phospho-L-seryl-[protein] + ADP + H(+). It carries out the reaction L-threonyl-[protein] + ATP = O-phospho-L-threonyl-[protein] + ADP + H(+). In terms of biological role, casein kinases are operationally defined by their preferential utilization of acidic proteins such as caseins as substrates. The alpha chain contains the catalytic site. This is Casein kinase II subunit alpha from Theileria annulata.